The primary structure comprises 233 residues: Germin-like protein (233 aa).

An N-terminal signal peptide occupies residues 1 to 22; the sequence is MEAYKMFAFVVLLATTLYQAYA. Cys-32 and Cys-49 form a disulfide bridge. A Cupin type-1 domain is found at 63-215; the sequence is RGLNMPANTD…RPSISMRIWS (153 aa). Mn(2+) contacts are provided by His-111, His-113, Glu-118, and His-162.

The protein belongs to the germin family. As to quaternary structure, oligomer (believed to be a pentamer but probably hexamer). In terms of tissue distribution, expressed at high levels in unstressed roots.

It localises to the secreted. It is found in the extracellular space. The protein localises to the apoplast. Its function is as follows. May be involved in seed germination. In Mesembryanthemum crystallinum (Common ice plant), this protein is Germin-like protein.